Reading from the N-terminus, the 228-residue chain is uncharacterized protein (228 aa).

The protein belongs to the HAD-like hydrolase superfamily.

It is found in the cytoplasm. Its subcellular location is the nucleus. This is an uncharacterized protein from Schizosaccharomyces pombe (strain 972 / ATCC 24843) (Fission yeast).